The primary structure comprises 360 residues: 3-isopropylmalate dehydrogenase (360 aa).

76–89 (GPKWDTIERDIRPE) lines the NAD(+) pocket. Arginine 96, arginine 106, arginine 134, and aspartate 224 together coordinate substrate. 3 residues coordinate Mg(2+): aspartate 224, aspartate 248, and aspartate 252. 282 to 294 (GSAPDIAGKGIAN) serves as a coordination point for NAD(+).

It belongs to the isocitrate and isopropylmalate dehydrogenases family. LeuB type 1 subfamily. Homodimer. It depends on Mg(2+) as a cofactor. Requires Mn(2+) as cofactor.

Its subcellular location is the cytoplasm. It catalyses the reaction (2R,3S)-3-isopropylmalate + NAD(+) = 4-methyl-2-oxopentanoate + CO2 + NADH. The protein operates within amino-acid biosynthesis; L-leucine biosynthesis; L-leucine from 3-methyl-2-oxobutanoate: step 3/4. Its function is as follows. Catalyzes the oxidation of 3-carboxy-2-hydroxy-4-methylpentanoate (3-isopropylmalate) to 3-carboxy-4-methyl-2-oxopentanoate. The product decarboxylates to 4-methyl-2 oxopentanoate. The sequence is that of 3-isopropylmalate dehydrogenase from Pseudomonas savastanoi pv. phaseolicola (strain 1448A / Race 6) (Pseudomonas syringae pv. phaseolicola (strain 1448A / Race 6)).